A 567-amino-acid chain; its full sequence is Unguisins hydrolase ungD (567 aa).

This sequence belongs to the peptidase S12 family.

It functions in the pathway secondary metabolite biosynthesis. Hydrolase; part of the gene cluster that mediates the biosynthesis of the unguisins, gamma-aminobutyric acid (GABA)-containing fungal cyclic heptapeptides with the amino acid sequence cyclo-(D-Ala1-D-Val2-L-Phe3-D-Val4-D-Ala5-D-Trp6-GABA7) for unguisin A and cyclo-(D-Ala1-D-Val2-L-Leu3-D-Val4-D-Ala5-D-Trp6-GABA7) for unguisin B. Within the pathway, the hydrolase ungD catalyzes the hydrolysis between the D-tryptophan and GABA residues of unguisins A and B to produce the corresponding linear peptides. The alanine racemase ungC catalyzes the interconversion of L-alanine and D-alanine, providing the D-alanine which is accepted by the first adenylation domain of the nonribosomal peptide synthetase (NRPS) ungA. UngA is the main enzyme within the cluster which condenses the 7 residues using its respective 7 modules. The terminal condensation domain (Ct) is involved in cyclization with D-alanine and thereby releasing of unguisins A and B. The protein is Unguisins hydrolase ungD of Aspergillus violaceofuscus (strain CBS 115571).